A 155-amino-acid polypeptide reads, in one-letter code: Snaclec clone 2100755 (155 aa).

The signal sequence occupies residues 1-23; that stretch reads MGRFIFVSFGLLVVFLSLSGTAA. 3 disulfide bridges follow: Cys25-Cys36, Cys53-Cys144, and Cys119-Cys136. The 114-residue stretch at 32–145 folds into the C-type lectin domain; it reads YDGHCYQVFS…CEKSVSFVCK (114 aa).

It belongs to the snaclec family. As to quaternary structure, heterodimer; disulfide-linked.

It localises to the secreted. Its function is as follows. Interferes with one step of hemostasis (modulation of platelet aggregation, or coagulation cascade, for example). This Deinagkistrodon acutus (Hundred-pace snake) protein is Snaclec clone 2100755.